A 451-amino-acid chain; its full sequence is Bifunctional protein GlmU (451 aa).

A pyrophosphorylase region spans residues 1-229; that stretch reads MQRNAVILAA…FNEIMGVNDR (229 aa). UDP-N-acetyl-alpha-D-glucosamine is bound by residues 8–11, Lys-22, Gln-72, and 77–78; these read LAAG and GT. Residue Asp-102 participates in Mg(2+) binding. UDP-N-acetyl-alpha-D-glucosamine contacts are provided by Gly-139, Glu-154, and Asn-227. Asn-227 contributes to the Mg(2+) binding site. The linker stretch occupies residues 230 to 250; it reads VMLSNAEKALQQRINIEHMRN. Residues 251–451 form an N-acetyltransferase region; sequence GVTIIDPTTT…QITKEGYLKK (201 aa). 2 residues coordinate UDP-N-acetyl-alpha-D-glucosamine: Arg-332 and Lys-350. The active-site Proton acceptor is His-362. Positions 365 and 376 each coordinate UDP-N-acetyl-alpha-D-glucosamine. Residues 385–386, Ala-422, and Arg-439 each bind acetyl-CoA; that span reads NY.

In the N-terminal section; belongs to the N-acetylglucosamine-1-phosphate uridyltransferase family. This sequence in the C-terminal section; belongs to the transferase hexapeptide repeat family. Homotrimer. The cofactor is Mg(2+).

The protein localises to the cytoplasm. It catalyses the reaction alpha-D-glucosamine 1-phosphate + acetyl-CoA = N-acetyl-alpha-D-glucosamine 1-phosphate + CoA + H(+). The catalysed reaction is N-acetyl-alpha-D-glucosamine 1-phosphate + UTP + H(+) = UDP-N-acetyl-alpha-D-glucosamine + diphosphate. The protein operates within nucleotide-sugar biosynthesis; UDP-N-acetyl-alpha-D-glucosamine biosynthesis; N-acetyl-alpha-D-glucosamine 1-phosphate from alpha-D-glucosamine 6-phosphate (route II): step 2/2. It participates in nucleotide-sugar biosynthesis; UDP-N-acetyl-alpha-D-glucosamine biosynthesis; UDP-N-acetyl-alpha-D-glucosamine from N-acetyl-alpha-D-glucosamine 1-phosphate: step 1/1. Its pathway is bacterial outer membrane biogenesis; LPS lipid A biosynthesis. Functionally, catalyzes the last two sequential reactions in the de novo biosynthetic pathway for UDP-N-acetylglucosamine (UDP-GlcNAc). The C-terminal domain catalyzes the transfer of acetyl group from acetyl coenzyme A to glucosamine-1-phosphate (GlcN-1-P) to produce N-acetylglucosamine-1-phosphate (GlcNAc-1-P), which is converted into UDP-GlcNAc by the transfer of uridine 5-monophosphate (from uridine 5-triphosphate), a reaction catalyzed by the N-terminal domain. This is Bifunctional protein GlmU from Staphylococcus haemolyticus (strain JCSC1435).